A 440-amino-acid polypeptide reads, in one-letter code: Chromosome partition protein MukF (440 aa).

Positions 208–236 are leucine-zipper; that stretch reads LSETSGTLRELQDTLEAAGDKLQANLLRI.

This sequence belongs to the MukF family. In terms of assembly, interacts, and probably forms a ternary complex, with MukE and MukB via its C-terminal region. The complex formation is stimulated by calcium or magnesium. It is required for an interaction between MukE and MukB.

The protein localises to the cytoplasm. Its subcellular location is the nucleoid. Its function is as follows. Involved in chromosome condensation, segregation and cell cycle progression. May participate in facilitating chromosome segregation by condensation DNA from both sides of a centrally located replisome during cell division. Not required for mini-F plasmid partitioning. Probably acts via its interaction with MukB and MukE. Overexpression results in anucleate cells. It has a calcium binding activity. This chain is Chromosome partition protein MukF, found in Escherichia coli (strain ATCC 8739 / DSM 1576 / NBRC 3972 / NCIMB 8545 / WDCM 00012 / Crooks).